A 346-amino-acid polypeptide reads, in one-letter code: S-adenosylmethionine:tRNA ribosyltransferase-isomerase (346 aa).

It belongs to the QueA family. In terms of assembly, monomer.

The protein resides in the cytoplasm. It catalyses the reaction 7-aminomethyl-7-carbaguanosine(34) in tRNA + S-adenosyl-L-methionine = epoxyqueuosine(34) in tRNA + adenine + L-methionine + 2 H(+). The protein operates within tRNA modification; tRNA-queuosine biosynthesis. Transfers and isomerizes the ribose moiety from AdoMet to the 7-aminomethyl group of 7-deazaguanine (preQ1-tRNA) to give epoxyqueuosine (oQ-tRNA). The chain is S-adenosylmethionine:tRNA ribosyltransferase-isomerase from Borreliella afzelii (strain PKo) (Borrelia afzelii).